A 131-amino-acid polypeptide reads, in one-letter code: Small ribosomal subunit protein uS11 (131 aa).

This sequence belongs to the universal ribosomal protein uS11 family. Part of the 30S ribosomal subunit. Interacts with proteins S7 and S18. Binds to IF-3.

In terms of biological role, located on the platform of the 30S subunit, it bridges several disparate RNA helices of the 16S rRNA. Forms part of the Shine-Dalgarno cleft in the 70S ribosome. In Thermotoga neapolitana (strain ATCC 49049 / DSM 4359 / NBRC 107923 / NS-E), this protein is Small ribosomal subunit protein uS11.